A 142-amino-acid chain; its full sequence is ATP synthase epsilon chain (142 aa).

Belongs to the ATPase epsilon chain family. F-type ATPases have 2 components, CF(1) - the catalytic core - and CF(0) - the membrane proton channel. CF(1) has five subunits: alpha(3), beta(3), gamma(1), delta(1), epsilon(1). CF(0) has three main subunits: a, b and c.

The protein resides in the cell inner membrane. Its function is as follows. Produces ATP from ADP in the presence of a proton gradient across the membrane. This Shewanella oneidensis (strain ATCC 700550 / JCM 31522 / CIP 106686 / LMG 19005 / NCIMB 14063 / MR-1) protein is ATP synthase epsilon chain.